The primary structure comprises 446 residues: tRNA-2-methylthio-N(6)-dimethylallyladenosine synthase (446 aa).

The MTTase N-terminal domain occupies 3 to 120; sequence KKLFIETHGC…LPEMIDAARS (118 aa). Residues Cys-12, Cys-49, Cys-83, Cys-157, Cys-161, and Cys-164 each contribute to the [4Fe-4S] cluster site. One can recognise a Radical SAM core domain in the interval 143-375; it reads RVDGPTAFVS…QSRIHQQGYE (233 aa). The TRAM domain maps to 378–442; sequence RRMVGSTQRI…PHSLRGTLID (65 aa).

Belongs to the methylthiotransferase family. MiaB subfamily. In terms of assembly, monomer. [4Fe-4S] cluster serves as cofactor.

Its subcellular location is the cytoplasm. It carries out the reaction N(6)-dimethylallyladenosine(37) in tRNA + (sulfur carrier)-SH + AH2 + 2 S-adenosyl-L-methionine = 2-methylsulfanyl-N(6)-dimethylallyladenosine(37) in tRNA + (sulfur carrier)-H + 5'-deoxyadenosine + L-methionine + A + S-adenosyl-L-homocysteine + 2 H(+). Catalyzes the methylthiolation of N6-(dimethylallyl)adenosine (i(6)A), leading to the formation of 2-methylthio-N6-(dimethylallyl)adenosine (ms(2)i(6)A) at position 37 in tRNAs that read codons beginning with uridine. The polypeptide is tRNA-2-methylthio-N(6)-dimethylallyladenosine synthase (Pseudomonas aeruginosa (strain UCBPP-PA14)).